Consider the following 192-residue polypeptide: Large ribosomal subunit protein uL3 (192 aa).

The protein belongs to the universal ribosomal protein uL3 family. In terms of assembly, part of the 50S ribosomal subunit. Forms a cluster with proteins L14 and L19.

Functionally, one of the primary rRNA binding proteins, it binds directly near the 3'-end of the 23S rRNA, where it nucleates assembly of the 50S subunit. In Helicobacter hepaticus (strain ATCC 51449 / 3B1), this protein is Large ribosomal subunit protein uL3 (rplC).